The following is a 150-amino-acid chain: Deoxyuridine 5'-triphosphate nucleotidohydrolase (150 aa).

Residues 69 to 71 (RSG), Asn82, 86 to 88 (LID), and Lys96 contribute to the substrate site.

The protein belongs to the dUTPase family. Mg(2+) is required as a cofactor.

It catalyses the reaction dUTP + H2O = dUMP + diphosphate + H(+). Its pathway is pyrimidine metabolism; dUMP biosynthesis; dUMP from dCTP (dUTP route): step 2/2. This enzyme is involved in nucleotide metabolism: it produces dUMP, the immediate precursor of thymidine nucleotides and it decreases the intracellular concentration of dUTP so that uracil cannot be incorporated into DNA. In Neisseria meningitidis serogroup A / serotype 4A (strain DSM 15465 / Z2491), this protein is Deoxyuridine 5'-triphosphate nucleotidohydrolase.